The sequence spans 299 residues: tRNA uridine(34) hydroxylase (299 aa).

A Rhodanese domain is found at 132-226; it reads AGRPVVMLDT…YFEEVGGAHY (95 aa). The active-site Cysteine persulfide intermediate is cysteine 186.

It belongs to the TrhO family.

It carries out the reaction uridine(34) in tRNA + AH2 + O2 = 5-hydroxyuridine(34) in tRNA + A + H2O. In terms of biological role, catalyzes oxygen-dependent 5-hydroxyuridine (ho5U) modification at position 34 in tRNAs. The sequence is that of tRNA uridine(34) hydroxylase from Burkholderia pseudomallei (strain 1106a).